The following is a 417-amino-acid chain: UDP-N-acetylglucosamine 1-carboxyvinyltransferase (417 aa).

Residue 22 to 23 (KN) coordinates phosphoenolpyruvate. Arg92 is a UDP-N-acetyl-alpha-D-glucosamine binding site. Cys116 acts as the Proton donor in catalysis. Cys116 bears the 2-(S-cysteinyl)pyruvic acid O-phosphothioketal mark. Residues Asp304 and Ile326 each coordinate UDP-N-acetyl-alpha-D-glucosamine.

It belongs to the EPSP synthase family. MurA subfamily.

It localises to the cytoplasm. It catalyses the reaction phosphoenolpyruvate + UDP-N-acetyl-alpha-D-glucosamine = UDP-N-acetyl-3-O-(1-carboxyvinyl)-alpha-D-glucosamine + phosphate. The protein operates within cell wall biogenesis; peptidoglycan biosynthesis. Functionally, cell wall formation. Adds enolpyruvyl to UDP-N-acetylglucosamine. This Geobacter sulfurreducens (strain ATCC 51573 / DSM 12127 / PCA) protein is UDP-N-acetylglucosamine 1-carboxyvinyltransferase.